Here is a 195-residue protein sequence, read N- to C-terminus: Thymidine kinase (195 aa).

ATP is bound by residues 9-16 (ATMNAGKS) and 89-92 (DEAQ). The active-site Proton acceptor is Glu-90. Zn(2+) contacts are provided by Cys-147, Cys-149, Cys-184, and His-187.

Belongs to the thymidine kinase family. Homotetramer.

It localises to the cytoplasm. It carries out the reaction thymidine + ATP = dTMP + ADP + H(+). This chain is Thymidine kinase, found in Rhizobium meliloti (strain 1021) (Ensifer meliloti).